A 412-amino-acid polypeptide reads, in one-letter code: Palmitoyltransferase swf1 (412 aa).

Residues 1–2 (MG) are Lumenal-facing. The helical transmembrane segment at 3 to 23 (LLRTIALVILGFSAFIFTVLF) threads the bilayer. The Cytoplasmic portion of the chain corresponds to 24–78 (GRLPVFRKTPIGLLHRIIWLHIPHGISYIDARLFNGRILRSWGQAGNYILYENHP). A helical membrane pass occupies residues 79–99 (LVLIFFTTILVIGELIFIPSA). Residues 100–107 (WPRISVMH) lie on the Lumenal side of the membrane. A helical membrane pass occupies residues 108-128 (QLYIPIIIALPYYFLYVSVVT). At 129-198 (KSYITPDNHA…TNCVGLNNYH (70 aa)) the chain is on the cytoplasmic side. Residues 155 to 205 (HSCETCHFLKPARSKHCSYCKRCVSRQDHHCIWLTNCVGLNNYHYFLYLLL) enclose the DHHC domain. The helical transmembrane segment at 199–219 (YFLYLLLSLSVMLTYGSWLGY) threads the bilayer. Over 220–265 (SLLSQTLDRLIPPSSPVRLRKQSWPTFLNMWAAVVAYDTRIGGVTM) the chain is Lumenal. Residues 266–286 (LMFMTAPLAFAFLVYHVYLIW) form a helical membrane-spanning segment. Residues 287 to 412 (AGMTTNESAK…NYAAGKAHRA (126 aa)) lie on the Cytoplasmic side of the membrane.

Belongs to the DHHC palmitoyltransferase family. SWF1 subfamily.

Its subcellular location is the endoplasmic reticulum membrane. It carries out the reaction L-cysteinyl-[protein] + hexadecanoyl-CoA = S-hexadecanoyl-L-cysteinyl-[protein] + CoA. In terms of biological role, palmitoyltransferase that targets several endosomal SNAREs. Palmitoylates the SNAREs at cysteine residues close to the cytoplasmic end of their transmembrane domain. May have a role in the cellular quality control of transmembrane domain-containing proteins. The chain is Palmitoyltransferase swf1 (swf1) from Emericella nidulans (strain FGSC A4 / ATCC 38163 / CBS 112.46 / NRRL 194 / M139) (Aspergillus nidulans).